We begin with the raw amino-acid sequence, 167 residues long: Signal peptidase complex catalytic subunit SEC11 (167 aa).

The Cytoplasmic segment spans residues 1 to 12 (MNIRHQLVQFLN). Residues 13-30 (LALVLSSAFMAWKTLSVI) form a helical; Signal-anchor for type II membrane protein membrane-spanning segment. The Lumenal segment spans residues 31-167 (TNSHSPIVVV…MGISSLLSNE (137 aa)). Catalysis depends on charge relay system residues serine 44, histidine 83, and aspartate 109. The interval 153-164 (TLLGLMGISSLL) is C-terminal short (CTS) helix.

This sequence belongs to the peptidase S26B family. As to quaternary structure, component of the signal peptidase complex (SPC) composed of a catalytic subunit SEC11 and three accessory subunits SPC1, SPC2 and SPC3. The complex induces a local thinning of the ER membrane which is used to measure the length of the signal peptide (SP) h-region of protein substrates. This ensures the selectivity of the complex towards h-regions shorter than 18-20 amino acids. SPC associates with the translocon complex.

The protein localises to the endoplasmic reticulum membrane. The enzyme catalyses Cleavage of hydrophobic, N-terminal signal or leader sequences from secreted and periplasmic proteins.. Catalytic component of the signal peptidase complex (SPC) which catalyzes the cleavage of N-terminal signal sequences from nascent proteins as they are translocated into the lumen of the endoplasmic reticulum. Specifically cleaves N-terminal signal peptides that contain a hydrophobic alpha-helix (h-region) shorter than 18-20 amino acids. The chain is Signal peptidase complex catalytic subunit SEC11 (SEC11) from Debaryomyces hansenii (strain ATCC 36239 / CBS 767 / BCRC 21394 / JCM 1990 / NBRC 0083 / IGC 2968) (Yeast).